The following is a 174-amino-acid chain: FMN reductase (NADH) SmoA (174 aa).

Belongs to the non-flavoprotein flavin reductase family.

It carries out the reaction FMNH2 + NAD(+) = FMN + NADH + 2 H(+). Its function is as follows. Part of the sulfoquinovose monooxygenase (sulfo-SMO) pathway, a D-sulfoquinovose degradation pathway that enables the complete utilization of all carbons within sulfoquinovose (SQ) with concomitant production of inorganic sulfite. Catalyzes the NADH-dependent reduction of FMN. FMNH(2) is then transferred to the sulfoquinovose monooxygenase SmoC. The polypeptide is FMN reductase (NADH) SmoA (Agrobacterium fabrum (strain C58 / ATCC 33970) (Agrobacterium tumefaciens (strain C58))).